The primary structure comprises 96 residues: Large ribosomal subunit protein bL28 (96 aa).

It belongs to the bacterial ribosomal protein bL28 family.

The protein is Large ribosomal subunit protein bL28 of Leptospira biflexa serovar Patoc (strain Patoc 1 / Ames).